Here is a 798-residue protein sequence, read N- to C-terminus: Peregrinol diphosphate synthase TPS1, chloroplastic (798 aa).

The N-terminal 25 residues, 1–25 (MASLSTPNINNTTFVNSKTQLPAVK), are a transit peptide targeting the chloroplast. Position 243 (Lys-243) interacts with substrate. Mg(2+) is bound by residues Asp-377 and Asp-379. Residues 377–380 (DLDD) carry the DXDD motif motif. A substrate-binding site is contributed by Lys-463.

This sequence belongs to the terpene synthase family. Mg(2+) serves as cofactor. In terms of tissue distribution, mostly expressed in trichomes of leaves and fruits.

The protein resides in the plastid. It is found in the chloroplast. It catalyses the reaction peregrinol diphosphate = (2E,6E,10E)-geranylgeranyl diphosphate + H2O. Its pathway is secondary metabolite biosynthesis; terpenoid biosynthesis. Functionally, involved in the biosynthesis of labdane-type diterpenoid including cleroda-dienols, and peregrinol lactones and furan derivatives, dopaminergic diterpenoids that can bind to dopamine receptors in the human pituitary gland, have probably ability to lower prolactin levels, and are used to treat menstrual cycle disorders (e.g. premenstrual syndrome and mastodynia). Terpene synthase that produces peregrinol diphosphate from geranylgeranyl diphosphate (GGPP). This chain is Peregrinol diphosphate synthase TPS1, chloroplastic, found in Vitex agnus-castus (Chaste tree).